The following is a 103-amino-acid chain: NADH-quinone oxidoreductase subunit K (103 aa).

3 helical membrane-spanning segments follow: residues 1–21 (MIVP…VGGV), 29–49 (ILLI…AFAG), and 62–82 (AVII…ALLV). The segment at 84-103 (GRRGGGTDRADSYDRLGEES) is disordered. Over residues 88-103 (GGTDRADSYDRLGEES) the composition is skewed to basic and acidic residues.

The protein belongs to the complex I subunit 4L family. In terms of assembly, NDH-1 is composed of 14 different subunits. Subunits NuoA, H, J, K, L, M, N constitute the membrane sector of the complex.

It localises to the cell inner membrane. It catalyses the reaction a quinone + NADH + 5 H(+)(in) = a quinol + NAD(+) + 4 H(+)(out). Its function is as follows. NDH-1 shuttles electrons from NADH, via FMN and iron-sulfur (Fe-S) centers, to quinones in the respiratory chain. The immediate electron acceptor for the enzyme in this species is believed to be ubiquinone. Couples the redox reaction to proton translocation (for every two electrons transferred, four hydrogen ions are translocated across the cytoplasmic membrane), and thus conserves the redox energy in a proton gradient. This is NADH-quinone oxidoreductase subunit K from Solidesulfovibrio magneticus (strain ATCC 700980 / DSM 13731 / RS-1) (Desulfovibrio magneticus).